A 314-amino-acid chain; its full sequence is Acetaldehyde dehydrogenase 2 (314 aa).

Ser-11–Ile-14 serves as a coordination point for NAD(+). The active-site Acyl-thioester intermediate is Cys-129. Residues Ser-160–Asn-168 and Asn-291 contribute to the NAD(+) site.

It belongs to the acetaldehyde dehydrogenase family.

It carries out the reaction acetaldehyde + NAD(+) + CoA = acetyl-CoA + NADH + H(+). The polypeptide is Acetaldehyde dehydrogenase 2 (Rhodococcus erythropolis (strain PR4 / NBRC 100887)).